The chain runs to 1829 residues: Iron-regulated protein FrpC (1829 aa).

22 Hemolysin-type calcium-binding repeats span residues 869–886 (FGHN…NDTL), 887–904 (IGGA…SDTY), 1015–1032 (NGGL…DDLL), 1033–1050 (NGDA…NDTL), 1051–1068 (DGGE…NDAL), 1069–1086 (NGGE…NDTL), 1087–1104 (IGGA…SDTY), 1215–1232 (NGGL…DDLL), 1233–1250 (NGDA…NDTL), 1251–1268 (DGGE…NDAL), 1269–1286 (NGGE…NDTL), 1287–1304 (IGGA…SDTY), 1415–1432 (NGGL…DDLL), 1433–1450 (NGDA…NDTL), 1451–1468 (NGGE…NDAL), 1469–1486 (NGGE…NDTL), 1487–1504 (IGGA…SDTY), 1615–1632 (NGGL…DDLL), 1633–1650 (NGDA…NDTL), 1651–1668 (DGGE…NDAL), 1669–1686 (NGGE…NDTL), and 1687–1704 (IGGA…SDTY). The disordered stretch occupies residues 1671–1690 (GEGNDHLNGEDGNDTLIGGA).

It belongs to the RTX prokaryotic toxin (TC 1.C.11) family.

The protein localises to the cell outer membrane. Its subcellular location is the secreted. Its function is as follows. May participate in the pathogenesis of meningococcal disease. The chain is Iron-regulated protein FrpC (frpC) from Neisseria meningitidis serogroup B (strain ATCC BAA-335 / MC58).